A 135-amino-acid polypeptide reads, in one-letter code: MAKTSRSVMIAKGLQRVLNVGLLLLAAILIVFLVKETIHLAKVLFVNNEESTSYLLIEGIVIYFLYFEFIALIVKYFESGYHFPLRYFIYIGITAIIRLIIVDHENPIDTLIYSAAILLLVVTLYLANTDRLKRE.

Transmembrane regions (helical) follow at residues 20-40 (VGLLLLAAILIVFLVKETIHL), 54-74 (YLLIEGIVIYFLYFEFIALIV), 82-102 (HFPLRYFIYIGITAIIRLIIV), and 107-127 (PIDTLIYSAAILLLVVTLYLA).

This sequence belongs to the PsiE family.

It localises to the cell inner membrane. This chain is Protein PsiE homolog, found in Serratia proteamaculans (strain 568).